The sequence spans 604 residues: Threonine--tRNA ligase (604 aa).

The catalytic stretch occupies residues 197–499 (DHRKLGRELG…LIEEYAGDFP (303 aa)). Zn(2+) contacts are provided by cysteine 296, histidine 347, and histidine 476.

It belongs to the class-II aminoacyl-tRNA synthetase family. In terms of assembly, homodimer. It depends on Zn(2+) as a cofactor.

The protein localises to the cytoplasm. The catalysed reaction is tRNA(Thr) + L-threonine + ATP = L-threonyl-tRNA(Thr) + AMP + diphosphate + H(+). In terms of biological role, catalyzes the attachment of threonine to tRNA(Thr) in a two-step reaction: L-threonine is first activated by ATP to form Thr-AMP and then transferred to the acceptor end of tRNA(Thr). Also edits incorrectly charged L-seryl-tRNA(Thr). This chain is Threonine--tRNA ligase, found in Synechococcus elongatus (strain ATCC 33912 / PCC 7942 / FACHB-805) (Anacystis nidulans R2).